A 535-amino-acid polypeptide reads, in one-letter code: ATP-dependent RNA helicase DBP3 (535 aa).

A compositionally biased stretch (basic and acidic residues) spans 1–21; that stretch reads MSKHELKDKKRKSVDGEDVSK. The segment at 1–82 is disordered; the sequence is MSKHELKDKK…GSETAPVGDS (82 aa). A compositionally biased stretch (basic residues) spans 22-33; it reads SKKVKKDKKDKK. Residues 34–72 are compositionally biased toward basic and acidic residues; that stretch reads DKKAKDGNDKVKDKKDKNKKDKSKTDKNLKEVQETEAHT. A Q motif motif is present at residues 125–151; sequence LSFSHLNLHSAIQKEISKFPKPTPIQA. A Helicase ATP-binding domain is found at 154-327; that stretch reads WPYLLAGKDV…STFMRAPVKV (174 aa). Position 167–174 (167–174) interacts with ATP; that stretch reads AETGSGKT. The DEAD box signature appears at 274-277; the sequence is DEAD. Positions 352 to 505 constitute a Helicase C-terminal domain; the sequence is KKEKRLLELL…PVPEELMKFG (154 aa).

The protein belongs to the DEAD box helicase family. DDX5/DBP2 subfamily.

Its subcellular location is the nucleus. The protein resides in the nucleolus. The catalysed reaction is ATP + H2O = ADP + phosphate + H(+). Functionally, ATP-dependent RNA helicase required for 60S ribosomal subunit synthesis. Involved in efficient pre-rRNA processing, predominantly at site A3, which is necessary for the normal formation of 25S and 5.8S rRNAs. The sequence is that of ATP-dependent RNA helicase DBP3 (DBP3) from Eremothecium gossypii (strain ATCC 10895 / CBS 109.51 / FGSC 9923 / NRRL Y-1056) (Yeast).